The sequence spans 352 residues: MQITAKMVKDLRESTGAGMMDCKKALVEANGDMEQAIKVLHEKGLGKAAKKADRLASEGLVCVLVNSDFSKATISEINSETDFVAKNDKFINFVNNTTKHIQDSNITNVEALNNSLINGEKFSDFITNQIATIGENLVVRRFNTINANGGVLNGYLHSNSRVGVIISATCENVDRKKAADFIYQLCMHAAAMKPSVISYKEFNPDFLKSELTALKAELEKENEELKRLGKPLNHIPEFASRAQISDEIIEKEKEKIRAELKKEGKPEKIWDKIIPGKLERFLADNTLLDQRLTLLGQFFVMDDKKTIEQVIDEKSKEFGGKITITNYIRYEVGEGLEKKSEDFAAEVAAQIG.

The tract at residues 81 to 84 (TDFV) is involved in Mg(2+) ion dislocation from EF-Tu.

The protein belongs to the EF-Ts family.

The protein resides in the cytoplasm. Associates with the EF-Tu.GDP complex and induces the exchange of GDP to GTP. It remains bound to the aminoacyl-tRNA.EF-Tu.GTP complex up to the GTP hydrolysis stage on the ribosome. The chain is Elongation factor Ts from Campylobacter hominis (strain ATCC BAA-381 / DSM 21671 / CCUG 45161 / LMG 19568 / NCTC 13146 / CH001A).